The chain runs to 122 residues: MIQTQSIVDVADNSGARRVMCIKVLGGSKRRYANIGDVIKVSIKEAIPRGKVKKGDVMHAVVVRTRKGVRRNDGSLIRFDNNAVVLLNNQLQLVGTRVFGPVVRELRTDKFMKIISLALEVL.

The protein belongs to the universal ribosomal protein uL14 family. Part of the 50S ribosomal subunit. Forms a cluster with proteins L3 and L19. In the 70S ribosome, L14 and L19 interact and together make contacts with the 16S rRNA in bridges B5 and B8.

Functionally, binds to 23S rRNA. Forms part of two intersubunit bridges in the 70S ribosome. The sequence is that of Large ribosomal subunit protein uL14 from Coxiella burnetii (strain RSA 331 / Henzerling II).